The chain runs to 3354 residues: Cadherin-23 (3354 aa).

The N-terminal stretch at 1–23 is a signal peptide; sequence MRYSLVTCYAVLWLLMLVPGSWG. Residues 24–3064 lie on the Extracellular side of the membrane; the sequence is QVNRLPFFTN…SVQLPDDMSA (3041 aa). 27 Cadherin domains span residues 34–132, 133–236, 237–348, 349–460, 461–561, 562–671, 672–784, 779–890, 891–995, 996–1102, 1103–1208, 1210–1313, 1314–1418, 1420–1527, 1529–1634, 1635–1744, 1745–1851, 1852–1959, 1960–2069, 2070–2174, 2175–2293, 2297–2402, 2403–2509, 2510–2611, 2614–2722, 2729–2846, and 2847–2975; these read HFFD…APTF, HNQP…DPIF, INLP…APEF, NSSE…RPIF, SQPL…VPTF, QKDA…PPTF, SKPA…APYY, KDAP…DPTF, RNLP…TPTF, FPAV…RPIF, LQSS…APVF, QQQY…AVQF, SNAS…SPRF, FTSD…PPVI, SPFG…APVF, QQPH…VPTF, PRDY…DPVL, LNLP…HPLF, TEGT…WPTF, SPPT…RPEF, LNPI…TPQF, GITY…NPIF, DQPS…RPQF, SKPQ…RPVF, PPNG…EPLF, SPQY…PPRF, and TKAE…EEEF. Asn-155 and Asn-206 each carry an N-linked (GlcNAc...) asparagine glycan. N-linked (GlcNAc...) asparagine glycans are attached at residues Asn-349, Asn-393, Asn-434, Asn-466, Asn-472, Asn-602, Asn-694, Asn-765, Asn-810, Asn-827, Asn-941, Asn-1001, Asn-1018, Asn-1171, Asn-1282, Asn-1315, Asn-1473, Asn-1534, Asn-1651, Asn-1667, Asn-1818, Asn-1857, Asn-1889, Asn-1902, Asn-2014, Asn-2050, Asn-2129, Asn-2168, Asn-2195, Asn-2263, Asn-2357, and Asn-2369. N-linked (GlcNAc...) asparagine glycans are attached at residues Asn-2578, Asn-2616, Asn-2749, Asn-2808, Asn-2877, Asn-2896, Asn-2941, and Asn-2981. A helical membrane pass occupies residues 3065–3085; the sequence is LQMAIIVLAILLFLAAMLFVL. The Cytoplasmic portion of the chain corresponds to 3086-3354; the sequence is MNWYYRTIHK…MESPLEITEL (269 aa).

Interacts with USH1C and USH1G. antiparallel heterodimer with PCDH15. Isoform C1: Interacts with CAMSAP3; leading to inhibit CAMSAP3 ability to induce microtubule bundle formation. In terms of tissue distribution, in adult animals relatively high levels of expression are found in testis, skeletal muscle, heart, eye and thymus, and lower expression in kidney, lung and brain. Found in the sensory hair cells of the inner ear.

The protein localises to the cell membrane. Cadherins are calcium-dependent cell adhesion proteins. They preferentially interact with themselves in a homophilic manner in connecting cells. CDH23 is required for establishing and/or maintaining the proper organization of the stereocilia bundle of hair cells in the cochlea and the vestibule during late embryonic/early postnatal development. It is part of the functional network formed by USH1C, USH1G, CDH23 and MYO7A that mediates mechanotransduction in cochlear hair cells. Required for normal hearing. The polypeptide is Cadherin-23 (Cdh23) (Mus musculus (Mouse)).